A 369-amino-acid chain; its full sequence is ATP-dependent 6-phosphofructokinase (369 aa).

ATP is bound by residues G15, 81–82, and 108–111; these read KG and GDGS. D109 is a Mg(2+) binding site. Substrate contacts are provided by residues 132–134, R169, 176–178, E230, R266, and 272–275; these read TID, MGR, and HIQR. The active-site Proton acceptor is D134.

It belongs to the phosphofructokinase type A (PFKA) family. Mixed-substrate PFK group III subfamily. Homodimer or homotetramer. The cofactor is Mg(2+).

The protein localises to the cytoplasm. It catalyses the reaction beta-D-fructose 6-phosphate + ATP = beta-D-fructose 1,6-bisphosphate + ADP + H(+). The protein operates within carbohydrate degradation; glycolysis; D-glyceraldehyde 3-phosphate and glycerone phosphate from D-glucose: step 3/4. Its function is as follows. Catalyzes the phosphorylation of D-fructose 6-phosphate to fructose 1,6-bisphosphate by ATP, the first committing step of glycolysis. The sequence is that of ATP-dependent 6-phosphofructokinase from Thermosynechococcus vestitus (strain NIES-2133 / IAM M-273 / BP-1).